We begin with the raw amino-acid sequence, 312 residues long: Porphobilinogen deaminase (312 aa).

Position 241 is an S-(dipyrrolylmethanemethyl)cysteine (cysteine 241).

The protein belongs to the HMBS family. In terms of assembly, monomer. Requires dipyrromethane as cofactor.

It catalyses the reaction 4 porphobilinogen + H2O = hydroxymethylbilane + 4 NH4(+). It functions in the pathway porphyrin-containing compound metabolism; protoporphyrin-IX biosynthesis; coproporphyrinogen-III from 5-aminolevulinate: step 2/4. Its function is as follows. Tetrapolymerization of the monopyrrole PBG into the hydroxymethylbilane pre-uroporphyrinogen in several discrete steps. In Trichlorobacter lovleyi (strain ATCC BAA-1151 / DSM 17278 / SZ) (Geobacter lovleyi), this protein is Porphobilinogen deaminase.